A 442-amino-acid chain; its full sequence is Serine--tRNA ligase (442 aa).

244–246 (TAE) is an L-serine binding site. Residue 275 to 277 (RAE) participates in ATP binding. Residue glutamate 298 coordinates L-serine. 365 to 368 (EISS) provides a ligand contact to ATP. Residue serine 400 coordinates L-serine.

The protein belongs to the class-II aminoacyl-tRNA synthetase family. Type-1 seryl-tRNA synthetase subfamily. In terms of assembly, homodimer. The tRNA molecule binds across the dimer.

The protein resides in the cytoplasm. It catalyses the reaction tRNA(Ser) + L-serine + ATP = L-seryl-tRNA(Ser) + AMP + diphosphate + H(+). The catalysed reaction is tRNA(Sec) + L-serine + ATP = L-seryl-tRNA(Sec) + AMP + diphosphate + H(+). It participates in aminoacyl-tRNA biosynthesis; selenocysteinyl-tRNA(Sec) biosynthesis; L-seryl-tRNA(Sec) from L-serine and tRNA(Sec): step 1/1. Catalyzes the attachment of serine to tRNA(Ser). Is also able to aminoacylate tRNA(Sec) with serine, to form the misacylated tRNA L-seryl-tRNA(Sec), which will be further converted into selenocysteinyl-tRNA(Sec). In Bradyrhizobium sp. (strain BTAi1 / ATCC BAA-1182), this protein is Serine--tRNA ligase.